The chain runs to 298 residues: Leucine-rich repeat-containing protein 38 (298 aa).

Residues Met-1–Ala-31 form the signal peptide. Disulfide bonds link Cys-32/Cys-38 and Cys-36/Cys-46. The LRRNT domain maps to Cys-32–Leu-60. The Extracellular portion of the chain corresponds to Cys-32–Asp-251. 5 LRR repeats span residues Asp-61–Phe-82, Asp-85–Gly-106, Lys-109–Ser-130, Arg-133–Ser-154, and Ser-157–Asp-177. N-linked (GlcNAc...) asparagine glycosylation is present at Asn-119. One can recognise an LRRCT domain in the interval Asn-190 to Phe-245. Disulfide bonds link Cys-194-Cys-221 and Cys-196-Cys-243. The chain crosses the membrane as a helical span at residues Leu-252 to Phe-272. Topologically, residues Leu-273–Asp-298 are cytoplasmic.

In terms of assembly, interacts with KCNMA1.

It localises to the cell membrane. Auxiliary protein of the large-conductance, voltage and calcium-activated potassium channel (BK alpha). Modulates gating properties by producing a marked shift in the BK channel's voltage dependence of activation in the hyperpolarizing direction, and in the absence of calcium. This chain is Leucine-rich repeat-containing protein 38 (Lrrc38), found in Mus musculus (Mouse).